We begin with the raw amino-acid sequence, 527 residues long: MSLSQVSPLPHIKDVVLGDTVGQGAFACVKNAHLQMDPSIILAVKFIHVPTCKKMGLSDKDITKEVVLQSKCSKHPNVLRLIDCNVSKEYMWIILEMADGGDLFDKIEPDVGVDSDVAQFYFQQLVSAINYLHVECGVAHRDIKPENILLDKNGNLKLADFGLASQFRRKDGTLRVSMDQRGSPPYMAPEVLYSEEGYYADRTDIWSIGILLFVLLTGQTPWELPSLENEDFVFFIENDGNLNWGPWSKIEFTHLNLLRKILQPDPNKRVTLKALKLHPWVLRRASFSGDDGLCNDPELLAKKLFSHLKVSLSNENYLKFTQDTNSNNRYISTQPIGNELAELEHDSMHFQTVSNTQRAFTSYDSNTNYNSGTGMTQEAKWTQFISYDIAALQFHSDENDCNELVKRHLQFNPNKLTKFYTLQPMDVLLPILEKALNLSQIRVKPDLFANFERLCELLGYDNVFPLIINIKTKSNGGYQLCGSISIIKIEEELKSVGFERKTGDPLEWRRLFKKISTICRDIILIPN.

The Protein kinase domain occupies 15–281; sequence VVLGDTVGQG…LKALKLHPWV (267 aa). ATP contacts are provided by residues 21-29 and K45; that span reads VGQGAFACV. The active-site Proton acceptor is D142.

Belongs to the protein kinase superfamily. CAMK Ser/Thr protein kinase family. NIM1 subfamily.

It localises to the nucleus. The enzyme catalyses L-seryl-[protein] + ATP = O-phospho-L-seryl-[protein] + ADP + H(+). It carries out the reaction L-threonyl-[protein] + ATP = O-phospho-L-threonyl-[protein] + ADP + H(+). Its function is as follows. Serine/threonine-protein kinase which is required for checkpoint-mediated cell cycle arrest and activation of DNA repair in response to the presence of DNA damage or unreplicated DNA. May also negatively regulate cell cycle progression during unperturbed cell cycles. Controls phosphorylation and abundance of PDS1 to prevent anaphase entry. Also helps prevent mitotic exit. The protein is Serine/threonine-protein kinase CHK1 (CHK1) of Saccharomyces cerevisiae (strain ATCC 204508 / S288c) (Baker's yeast).